The sequence spans 213 residues: Probable inactive serine/threonine-protein kinase DDB_G0280559 (213 aa).

Residues 1–211 (MVLRYSYVFK…WNEIVNHSFF (211 aa)) form the Protein kinase domain.

Belongs to the protein kinase superfamily. Ser/Thr protein kinase family.

The protein is Probable inactive serine/threonine-protein kinase DDB_G0280559 of Dictyostelium discoideum (Social amoeba).